Here is a 264-residue protein sequence, read N- to C-terminus: S-adenosylmethionine decarboxylase proenzyme (264 aa).

Residue serine 113 is the Schiff-base intermediate with substrate; via pyruvic acid of the active site. Serine 113 is subject to Pyruvic acid (Ser); by autocatalysis. The active-site Proton acceptor; for processing activity is histidine 118. Cysteine 141 functions as the Proton donor; for catalytic activity in the catalytic mechanism.

The protein belongs to the prokaryotic AdoMetDC family. Type 2 subfamily. In terms of assembly, heterooctamer of four alpha and four beta chains arranged as a tetramer of alpha/beta heterodimers. The cofactor is pyruvate. Post-translationally, is synthesized initially as an inactive proenzyme. Formation of the active enzyme involves a self-maturation process in which the active site pyruvoyl group is generated from an internal serine residue via an autocatalytic post-translational modification. Two non-identical subunits are generated from the proenzyme in this reaction, and the pyruvate is formed at the N-terminus of the alpha chain, which is derived from the carboxyl end of the proenzyme. The post-translation cleavage follows an unusual pathway, termed non-hydrolytic serinolysis, in which the side chain hydroxyl group of the serine supplies its oxygen atom to form the C-terminus of the beta chain, while the remainder of the serine residue undergoes an oxidative deamination to produce ammonia and the pyruvoyl group blocking the N-terminus of the alpha chain.

It carries out the reaction S-adenosyl-L-methionine + H(+) = S-adenosyl 3-(methylsulfanyl)propylamine + CO2. Its pathway is amine and polyamine biosynthesis; S-adenosylmethioninamine biosynthesis; S-adenosylmethioninamine from S-adenosyl-L-methionine: step 1/1. Its function is as follows. Catalyzes the decarboxylation of S-adenosylmethionine to S-adenosylmethioninamine (dcAdoMet), the propylamine donor required for the synthesis of the polyamines spermine and spermidine from the diamine putrescine. The chain is S-adenosylmethionine decarboxylase proenzyme from Pseudomonas syringae pv. tomato (strain ATCC BAA-871 / DC3000).